A 494-amino-acid chain; its full sequence is Glycerol kinase (494 aa).

An ADP-binding site is contributed by Thr12. ATP contacts are provided by Thr12, Thr13, and Ser14. A sn-glycerol 3-phosphate-binding site is contributed by Thr12. Position 16 (Arg16) interacts with ADP. Positions 82, 83, 134, and 241 each coordinate sn-glycerol 3-phosphate. Arg82, Glu83, Tyr134, Asp241, and Gln242 together coordinate glycerol. 2 residues coordinate ADP: Thr263 and Gly306. Positions 263, 306, 310, and 407 each coordinate ATP. ADP is bound at residue Gly407.

It belongs to the FGGY kinase family.

It carries out the reaction glycerol + ATP = sn-glycerol 3-phosphate + ADP + H(+). The protein operates within polyol metabolism; glycerol degradation via glycerol kinase pathway; sn-glycerol 3-phosphate from glycerol: step 1/1. With respect to regulation, inhibited by fructose 1,6-bisphosphate (FBP). In terms of biological role, key enzyme in the regulation of glycerol uptake and metabolism. Catalyzes the phosphorylation of glycerol to yield sn-glycerol 3-phosphate. This chain is Glycerol kinase, found in Brachyspira hyodysenteriae (strain ATCC 49526 / WA1).